The primary structure comprises 126 residues: Small ribosomal subunit protein uS8 (126 aa).

The protein belongs to the universal ribosomal protein uS8 family. In terms of assembly, part of the 30S ribosomal subunit. Contacts proteins S5 and S12.

In terms of biological role, one of the primary rRNA binding proteins, it binds directly to 16S rRNA central domain where it helps coordinate assembly of the platform of the 30S subunit. The polypeptide is Small ribosomal subunit protein uS8 (Desulfovibrio desulfuricans (strain ATCC 27774 / DSM 6949 / MB)).